The primary structure comprises 590 residues: L-fucose isomerase (590 aa).

Catalysis depends on proton acceptor residues Glu-337 and Asp-361. The Mn(2+) site is built by Glu-337, Asp-361, and His-528.

The protein belongs to the L-fucose isomerase family. The cofactor is Mn(2+).

It is found in the cytoplasm. The catalysed reaction is L-fucose = L-fuculose. The protein operates within carbohydrate degradation; L-fucose degradation; L-lactaldehyde and glycerone phosphate from L-fucose: step 1/3. Functionally, converts the aldose L-fucose into the corresponding ketose L-fuculose. The chain is L-fucose isomerase from Bacteroides fragilis (strain YCH46).